Here is an 853-residue protein sequence, read N- to C-terminus: Replication protein A 70 kDa DNA-binding subunit C (853 aa).

The segment at 118–282 (PKEPGHSSIN…QSAYQPQQPP (165 aa)) is disordered. Composition is skewed to polar residues over residues 124–144 (SSIN…SEQQ), 159–173 (SANS…NSSD), 180–194 (SANS…SSSD), 201–211 (SANSPQRQVVH), 222–249 (PQVS…SSNA), and 263–278 (TATT…AYQP). Positions 312 to 399 (WTIKVRVTSK…NDYEIHLDSA (88 aa)) form a DNA-binding region, OB. The C4-type zinc finger occupies 602–628 (CPIMNGDRPCSKKVTNNGDGTWRCEKC).

Belongs to the replication factor A protein 1 family. Heterotrimer of RPA1, RPA2 and RPA3 (canonical replication protein A complex).

Its subcellular location is the nucleus. Its function is as follows. Component of the replication protein A complex (RPA) required for DNA recombination, repair and replication. The activity of RPA is mediated by single-stranded DNA binding and protein interactions. Probably involved in repair of double-strand DNA breaks (DSBs) induced by genotoxic stresses. The chain is Replication protein A 70 kDa DNA-binding subunit C (RPA1C) from Arabidopsis thaliana (Mouse-ear cress).